The primary structure comprises 1165 residues: DNA-directed RNA polymerase subunit beta' (1165 aa).

Zn(2+) contacts are provided by Cys-60, Cys-62, Cys-75, and Cys-78. Residues Asp-449, Asp-451, and Asp-453 each coordinate Mg(2+). Zn(2+) contacts are provided by Cys-794, Cys-868, Cys-875, and Cys-878.

The protein belongs to the RNA polymerase beta' chain family. As to quaternary structure, the RNAP catalytic core consists of 2 alpha, 1 beta, 1 beta' and 1 omega subunit. When a sigma factor is associated with the core the holoenzyme is formed, which can initiate transcription. It depends on Mg(2+) as a cofactor. Requires Zn(2+) as cofactor.

The enzyme catalyses RNA(n) + a ribonucleoside 5'-triphosphate = RNA(n+1) + diphosphate. DNA-dependent RNA polymerase catalyzes the transcription of DNA into RNA using the four ribonucleoside triphosphates as substrates. The polypeptide is DNA-directed RNA polymerase subunit beta' (Acetivibrio thermocellus (strain ATCC 27405 / DSM 1237 / JCM 9322 / NBRC 103400 / NCIMB 10682 / NRRL B-4536 / VPI 7372) (Clostridium thermocellum)).